The sequence spans 197 residues: Pyridoxal 5'-phosphate synthase subunit PdxT (197 aa).

53–55 (GES) provides a ligand contact to L-glutamine. Cysteine 85 serves as the catalytic Nucleophile. L-glutamine-binding positions include arginine 114 and 142–143 (IR). Residues histidine 179 and glutamate 181 each act as charge relay system in the active site.

This sequence belongs to the glutaminase PdxT/SNO family. In terms of assembly, in the presence of PdxS, forms a dodecamer of heterodimers. Only shows activity in the heterodimer.

It carries out the reaction aldehydo-D-ribose 5-phosphate + D-glyceraldehyde 3-phosphate + L-glutamine = pyridoxal 5'-phosphate + L-glutamate + phosphate + 3 H2O + H(+). The enzyme catalyses L-glutamine + H2O = L-glutamate + NH4(+). Its pathway is cofactor biosynthesis; pyridoxal 5'-phosphate biosynthesis. Its function is as follows. Catalyzes the hydrolysis of glutamine to glutamate and ammonia as part of the biosynthesis of pyridoxal 5'-phosphate. The resulting ammonia molecule is channeled to the active site of PdxS. This chain is Pyridoxal 5'-phosphate synthase subunit PdxT, found in Thermococcus kodakarensis (strain ATCC BAA-918 / JCM 12380 / KOD1) (Pyrococcus kodakaraensis (strain KOD1)).